The chain runs to 136 residues: MRHYEIIFLVHPDQSEQVGGMVERYTKLIEEDGGKIHRLEDWGRRQLAYAINNVHKAHYVLINVECSGKALSELEDNFRYNDAVIRNLVIRRDEAITGQSEMLKAEENRSERRERRERPEHGGHEGLDGDSDKADE.

The disordered stretch occupies residues 99–136; the sequence is QSEMLKAEENRSERRERRERPEHGGHEGLDGDSDKADE. A compositionally biased stretch (basic and acidic residues) spans 103–136; sequence LKAEENRSERRERRERPEHGGHEGLDGDSDKADE.

The protein belongs to the bacterial ribosomal protein bS6 family.

Functionally, binds together with bS18 to 16S ribosomal RNA. The chain is Small ribosomal subunit protein bS6 from Azotobacter vinelandii (strain DJ / ATCC BAA-1303).